A 77-amino-acid chain; its full sequence is U8-lycotoxin-Ls1g (77 aa).

An N-terminal signal peptide occupies residues 1 to 20 (MKLIIFTGLVLFAIVSLIEV). The propeptide occupies 21 to 26 (QADNER).

Belongs to the neurotoxin 19 (CSTX) family. 08 (U8-Lctx) subfamily. Post-translationally, contains 4 disulfide bonds. In terms of tissue distribution, expressed by the venom gland.

It is found in the secreted. The protein is U8-lycotoxin-Ls1g of Lycosa singoriensis (Wolf spider).